The sequence spans 166 residues: Large ribosomal subunit protein uL11z (166 aa).

It belongs to the universal ribosomal protein uL11 family.

Binds directly to 26S ribosomal RNA. The chain is Large ribosomal subunit protein uL11z (RPL12A) from Arabidopsis thaliana (Mouse-ear cress).